Here is a 257-residue protein sequence, read N- to C-terminus: Pantothenate synthetase (257 aa).

29–36 (MGNLHAGH) lines the ATP pocket. Residue His36 is the Proton donor of the active site. (R)-pantoate is bound at residue Gln60. A beta-alanine-binding site is contributed by Gln60. Residue 145 to 148 (GEKD) coordinates ATP. Gln151 provides a ligand contact to (R)-pantoate. ATP contacts are provided by residues Val174 and 182–185 (LSSR).

Belongs to the pantothenate synthetase family. In terms of assembly, homodimer.

It localises to the cytoplasm. The catalysed reaction is (R)-pantoate + beta-alanine + ATP = (R)-pantothenate + AMP + diphosphate + H(+). The protein operates within cofactor biosynthesis; (R)-pantothenate biosynthesis; (R)-pantothenate from (R)-pantoate and beta-alanine: step 1/1. In terms of biological role, catalyzes the condensation of pantoate with beta-alanine in an ATP-dependent reaction via a pantoyl-adenylate intermediate. The protein is Pantothenate synthetase of Coxiella burnetii (strain Dugway 5J108-111).